Reading from the N-terminus, the 120-residue chain is Large ribosomal subunit protein bL20 (120 aa).

This sequence belongs to the bacterial ribosomal protein bL20 family.

Binds directly to 23S ribosomal RNA and is necessary for the in vitro assembly process of the 50S ribosomal subunit. It is not involved in the protein synthesizing functions of that subunit. The polypeptide is Large ribosomal subunit protein bL20 (Baumannia cicadellinicola subsp. Homalodisca coagulata).